The primary structure comprises 232 residues: Phosphatidylserine decarboxylase proenzyme (232 aa).

Residue Ser190 is the Schiff-base intermediate with substrate; via pyruvic acid of the active site. Residue Ser190 is modified to Pyruvic acid (Ser); by autocatalysis.

It belongs to the phosphatidylserine decarboxylase family. PSD-A subfamily. As to quaternary structure, heterodimer of a large membrane-associated beta subunit and a small pyruvoyl-containing alpha subunit. Pyruvate serves as cofactor. Is synthesized initially as an inactive proenzyme. Formation of the active enzyme involves a self-maturation process in which the active site pyruvoyl group is generated from an internal serine residue via an autocatalytic post-translational modification. Two non-identical subunits are generated from the proenzyme in this reaction, and the pyruvate is formed at the N-terminus of the alpha chain, which is derived from the carboxyl end of the proenzyme. The post-translation cleavage follows an unusual pathway, termed non-hydrolytic serinolysis, in which the side chain hydroxyl group of the serine supplies its oxygen atom to form the C-terminus of the beta chain, while the remainder of the serine residue undergoes an oxidative deamination to produce ammonia and the pyruvoyl prosthetic group on the alpha chain.

Its subcellular location is the cell membrane. It catalyses the reaction a 1,2-diacyl-sn-glycero-3-phospho-L-serine + H(+) = a 1,2-diacyl-sn-glycero-3-phosphoethanolamine + CO2. The protein operates within phospholipid metabolism; phosphatidylethanolamine biosynthesis; phosphatidylethanolamine from CDP-diacylglycerol: step 2/2. In terms of biological role, catalyzes the formation of phosphatidylethanolamine (PtdEtn) from phosphatidylserine (PtdSer). This chain is Phosphatidylserine decarboxylase proenzyme, found in Cereibacter sphaeroides (strain ATCC 17023 / DSM 158 / JCM 6121 / CCUG 31486 / LMG 2827 / NBRC 12203 / NCIMB 8253 / ATH 2.4.1.) (Rhodobacter sphaeroides).